A 299-amino-acid polypeptide reads, in one-letter code: Kynurenine formamidase-like hydrolase fscH (299 aa).

The short motif at 48–52 (HGGAW) is the HGGXW element. Residues 90 to 110 (SPRTPSQPVPSGGHVGGEQQA) are disordered. The Nucleophile role is filled by Ser142.

This sequence belongs to the kynurenine formamidase family.

It participates in secondary metabolite biosynthesis. Kynurenine formamidase-like hydrolase; part of the fragmented gene cluster that mediates the biosynthesis of fusarochromene, a tryptophan-derived metabolite closely related to a group of mycotoxins including fusarochromanone. Within the pathway, fscH converts the product of fscD into 4-hydroxykyrunenine. The first step of the pathway is the epimerization of L-tryptophan to D-tryptophan in the presence of the NRPS-like tryptophan epimerase fscC. D-tryptophan is subsequently hydroxylated by the tryptophan 6-hydroxylase fscE to yield 6-hydroxytryptophan. The pyrrole ring undergoes cleavaged by the tryptophan 2,3-dioxygenase fscD and is finally converted to 4-hydroxykyrunenine by the hydrolase fscH. The NRPS-like oxidoreductase fscA reduces the carboxyl group to primary alcohol and the DMATS-type prenyltransferase fscG performs prenylation, followed by the formation of a chromene ring catalyzed by the oxidoreductase fscI, which leads to desacetylfusarochromene. Epoxidation by fscF and rearrangement reactions of chromene double bonds convert compound desacetylfusarochromene to fusarochromanones. Although specific acetyltransferases were not found near the fsc gene cluster, several predicted enzymes containing the N-acetyltransferase superfamily domain are present in the genome of F.equiseti. These predicted enzymes may have the potential to convert desacetylfusarochromene to fusarochromene. In Fusarium equiseti (Fusarium scirpi), this protein is Kynurenine formamidase-like hydrolase fscH.